Reading from the N-terminus, the 204-residue chain is ATP-dependent Clp protease proteolytic subunit (204 aa).

The active-site Nucleophile is Ser102. His127 is an active-site residue.

It belongs to the peptidase S14 family. Fourteen ClpP subunits assemble into 2 heptameric rings which stack back to back to give a disk-like structure with a central cavity, resembling the structure of eukaryotic proteasomes.

The protein localises to the cytoplasm. It catalyses the reaction Hydrolysis of proteins to small peptides in the presence of ATP and magnesium. alpha-casein is the usual test substrate. In the absence of ATP, only oligopeptides shorter than five residues are hydrolyzed (such as succinyl-Leu-Tyr-|-NHMec, and Leu-Tyr-Leu-|-Tyr-Trp, in which cleavage of the -Tyr-|-Leu- and -Tyr-|-Trp bonds also occurs).. Its function is as follows. Cleaves peptides in various proteins in a process that requires ATP hydrolysis. Has a chymotrypsin-like activity. Plays a major role in the degradation of misfolded proteins. In Neisseria gonorrhoeae (strain ATCC 700825 / FA 1090), this protein is ATP-dependent Clp protease proteolytic subunit.